Here is a 392-residue protein sequence, read N- to C-terminus: tRNA (guanine(6)-N2)-methyltransferase (392 aa).

The region spanning 73–183 is the THUMP domain; it reads SAIPLLNHFS…DSELFVGVDT (111 aa). S-adenosyl-L-methionine contacts are provided by residues 199–203, 230–232, Glu275, 303–304, and Asn317; these read HPAHL, SGT, and DA.

This sequence belongs to the methyltransferase superfamily.

It localises to the cytoplasm. It catalyses the reaction guanosine(6) in tRNA + S-adenosyl-L-methionine = N(2)-methylguanosine(6) in tRNA + S-adenosyl-L-homocysteine + H(+). In terms of biological role, S-adenosyl-L-methionine-dependent methyltransferase that catalyzes the methylation of the guanosine nucleotide at position 6 (m2G6) in tRNA. The chain is tRNA (guanine(6)-N2)-methyltransferase from Archaeoglobus fulgidus (strain ATCC 49558 / DSM 4304 / JCM 9628 / NBRC 100126 / VC-16).